The sequence spans 650 residues: MGILETITGPRDLDRLSREQMVELAAEIRQFLVAEVSKTGGHLGPNLGVVETTLAIHRVFDSPRDAIVFDTGHQSYVHKLVTGRQDFSRLREAGGLAGYPQRSESEHDIVESSHASSSLSWADGISRAFGITGQTDRHVVAVVGDGALTGGMTWEALNNISDDNTRKLIIVVNDNGRSYAPTIGGMARFLNTVRTRRTYRGLYETSQRVFGVFGAPGDSLYRGLRGGLHGFLTRVTDNEALYSNLDIKYLGPIDGHDQQAMEEALEQARDYGAPVIVHAITEKGRGYEPARRDVADQFHAVGQIDPETGEPIDPSHAVSWTSVFADEILALADEDPRIVGITAAMLRPVGLHKFAEKHPDRVHDVGIAEQHAVTSAAGLAYGGLHPVVALYATFVNRAFDQVLMDVALHRAGVTFVLDRAGVTGPDGPSHHGMWDLALLQIVPHIRLSAPRDATRLREELGEAVKVDDAPTVVRFSKGSVGDEIEAVRRLDDGVDVLHESASKDVLIVTVGPMATMGIEVAERLAAQGIGATVVDPRWVVPVPRSVVELGGTHRLVVTIEDGVVVGGIGTRIRQDLREAGIDTGVTELGLPDEFLDHGTRSQILERVGLTPQHIARDVVAQVLGSRVPSARPLPEDAERVPMRAEDDEQA.

Residues H73 and 113-115 contribute to the thiamine diphosphate site; that span reads SHA. D145 contributes to the Mg(2+) binding site. Thiamine diphosphate contacts are provided by residues 146–147, N175, Y287, and E369; that span reads GA. N175 lines the Mg(2+) pocket. The disordered stretch occupies residues 629–650; it reads SARPLPEDAERVPMRAEDDEQA. Residues 633 to 644 are compositionally biased toward basic and acidic residues; the sequence is LPEDAERVPMRA.

The protein belongs to the transketolase family. DXPS subfamily. As to quaternary structure, homodimer. Mg(2+) serves as cofactor. It depends on thiamine diphosphate as a cofactor.

The catalysed reaction is D-glyceraldehyde 3-phosphate + pyruvate + H(+) = 1-deoxy-D-xylulose 5-phosphate + CO2. The protein operates within metabolic intermediate biosynthesis; 1-deoxy-D-xylulose 5-phosphate biosynthesis; 1-deoxy-D-xylulose 5-phosphate from D-glyceraldehyde 3-phosphate and pyruvate: step 1/1. Its function is as follows. Catalyzes the acyloin condensation reaction between C atoms 2 and 3 of pyruvate and glyceraldehyde 3-phosphate to yield 1-deoxy-D-xylulose-5-phosphate (DXP). The protein is 1-deoxy-D-xylulose-5-phosphate synthase of Clavibacter sepedonicus (Clavibacter michiganensis subsp. sepedonicus).